We begin with the raw amino-acid sequence, 362 residues long: Probable dual-specificity RNA methyltransferase RlmN (362 aa).

E105 functions as the Proton acceptor in the catalytic mechanism. In terms of domain architecture, Radical SAM core spans 111–344 (HEYGNSICVT…VTIRREQGHD (234 aa)). C118 and C349 are joined by a disulfide. 3 residues coordinate [4Fe-4S] cluster: C125, C129, and C132. S-adenosyl-L-methionine is bound by residues 175 to 176 (GE), S207, 230 to 232 (SLH), and N306. The active-site S-methylcysteine intermediate is C349.

Belongs to the radical SAM superfamily. RlmN family. It depends on [4Fe-4S] cluster as a cofactor.

It is found in the cytoplasm. The enzyme catalyses adenosine(2503) in 23S rRNA + 2 reduced [2Fe-2S]-[ferredoxin] + 2 S-adenosyl-L-methionine = 2-methyladenosine(2503) in 23S rRNA + 5'-deoxyadenosine + L-methionine + 2 oxidized [2Fe-2S]-[ferredoxin] + S-adenosyl-L-homocysteine. It catalyses the reaction adenosine(37) in tRNA + 2 reduced [2Fe-2S]-[ferredoxin] + 2 S-adenosyl-L-methionine = 2-methyladenosine(37) in tRNA + 5'-deoxyadenosine + L-methionine + 2 oxidized [2Fe-2S]-[ferredoxin] + S-adenosyl-L-homocysteine. Its function is as follows. Specifically methylates position 2 of adenine 2503 in 23S rRNA and position 2 of adenine 37 in tRNAs. The protein is Probable dual-specificity RNA methyltransferase RlmN of Bacillus cereus (strain ATCC 14579 / DSM 31 / CCUG 7414 / JCM 2152 / NBRC 15305 / NCIMB 9373 / NCTC 2599 / NRRL B-3711).